We begin with the raw amino-acid sequence, 614 residues long: Dihydroxy-acid dehydratase (614 aa).

Residue Asp81 participates in Mg(2+) binding. Cys122 serves as a coordination point for [2Fe-2S] cluster. 2 residues coordinate Mg(2+): Asp123 and Lys124. Lys124 bears the N6-carboxylysine mark. Residue Cys195 participates in [2Fe-2S] cluster binding. Mg(2+) is bound at residue Glu491. The Proton acceptor role is filled by Ser517.

This sequence belongs to the IlvD/Edd family. In terms of assembly, homodimer. The cofactor is [2Fe-2S] cluster. Requires Mg(2+) as cofactor.

It catalyses the reaction (2R)-2,3-dihydroxy-3-methylbutanoate = 3-methyl-2-oxobutanoate + H2O. The catalysed reaction is (2R,3R)-2,3-dihydroxy-3-methylpentanoate = (S)-3-methyl-2-oxopentanoate + H2O. Its pathway is amino-acid biosynthesis; L-isoleucine biosynthesis; L-isoleucine from 2-oxobutanoate: step 3/4. The protein operates within amino-acid biosynthesis; L-valine biosynthesis; L-valine from pyruvate: step 3/4. Functions in the biosynthesis of branched-chain amino acids. Catalyzes the dehydration of (2R,3R)-2,3-dihydroxy-3-methylpentanoate (2,3-dihydroxy-3-methylvalerate) into 2-oxo-3-methylpentanoate (2-oxo-3-methylvalerate) and of (2R)-2,3-dihydroxy-3-methylbutanoate (2,3-dihydroxyisovalerate) into 2-oxo-3-methylbutanoate (2-oxoisovalerate), the penultimate precursor to L-isoleucine and L-valine, respectively. The polypeptide is Dihydroxy-acid dehydratase (Nitrobacter winogradskyi (strain ATCC 25391 / DSM 10237 / CIP 104748 / NCIMB 11846 / Nb-255)).